Consider the following 166-residue polypeptide: Phospholipase A2 inhibitor clone 05 (166 aa).

The signal sequence occupies residues 1 to 19 (MRLILLSSLLLLGIFLADG). In terms of domain architecture, C-type lectin spans 46–161 (LKGAFLTVHR…CDDNLLVVCE (116 aa)). Cystine bridges form between cysteine 83–cysteine 160 and cysteine 138–cysteine 152. Asparagine 122 carries N-linked (GlcNAc...) asparagine glycosylation.

It belongs to the alpha-type phospholipase A2 inhibitor family. As to quaternary structure, homotrimer; non-covalently linked. As to expression, expressed by the liver.

It localises to the secreted. Functionally, this phospholipase A2 inhibitor binds directly phospholipase A2 in the presence or absence of calcium. In Bothrops moojeni (Lance-headed viper), this protein is Phospholipase A2 inhibitor clone 05.